Reading from the N-terminus, the 199-residue chain is Superoxide dismutase [Mn/Fe] 2 (199 aa).

Fe(3+)-binding residues include His-27, His-81, Asp-161, and His-165. 4 residues coordinate Mn(2+): His-27, His-81, Asp-161, and His-165.

It belongs to the iron/manganese superoxide dismutase family. Homodimer. Can also form a heterodimer with SodA. Mn(2+) is required as a cofactor. The cofactor is Fe(3+).

The enzyme catalyses 2 superoxide + 2 H(+) = H2O2 + O2. Destroys superoxide anion radicals which are normally produced within the cells and which are toxic to biological systems. Catalyzes the dismutation of superoxide anion radicals into O2 and H2O2 by successive reduction and oxidation of the transition metal ion at the active site. The sequence is that of Superoxide dismutase [Mn/Fe] 2 (sodM) from Staphylococcus aureus (strain bovine RF122 / ET3-1).